Reading from the N-terminus, the 138-residue chain is Transcription antitermination protein NusB (138 aa).

Belongs to the NusB family.

Functionally, involved in transcription antitermination. Required for transcription of ribosomal RNA (rRNA) genes. Binds specifically to the boxA antiterminator sequence of the ribosomal RNA (rrn) operons. This Leptospira interrogans serogroup Icterohaemorrhagiae serovar copenhageni (strain Fiocruz L1-130) protein is Transcription antitermination protein NusB.